Consider the following 229-residue polypeptide: Cilia- and flagella-associated protein 95 (229 aa).

The Extracellular segment spans residues 1-123 (MDSLDRSCQD…LLNEETVSSG (123 aa)). N75 carries N-linked (GlcNAc...) asparagine glycosylation. A helical transmembrane segment spans residues 124-140 (IIERVTGLPATGFGAVF). Residues 141-229 (PRHPPDWSKM…PLTSGPIVPI (89 aa)) are Cytoplasmic-facing. The segment at 153-163 (LTTYSEDYVPP) is mn.

As to quaternary structure, microtubule inner protein component of sperm flagellar doublet microtubules. Interacts with MYH9. Interacts with MYH10. As to expression, expressed in undifferentiated embryonic stem cells. Expressed in airway epithelial cells.

Its subcellular location is the cytoplasm. The protein resides in the cytoskeleton. It is found in the cilium axoneme. The protein localises to the flagellum axoneme. It localises to the cell membrane. Microtubule inner protein (MIP) part of the dynein-decorated doublet microtubules (DMTs) in cilia axoneme, which is required for motile cilia beating. This Homo sapiens (Human) protein is Cilia- and flagella-associated protein 95.